The sequence spans 262 residues: Transmembrane protein 270 (262 aa).

5 helical membrane-spanning segments follow: residues 6 to 26 (LVRSSLSGTLLVVVKLSALLI), 30 to 50 (AHLYNFLLLKIFLFNHWLLGL), 67 to 87 (PVGRVLWAGLTLLEVPVCLAL), 92 to 112 (LVWAGLLGCARALGLGPKWLG), and 127 to 147 (LFLSCLHSLMLAALLLLLLVW). Residues 226–262 (QEAEPQKALGLSSETPPPGPPAPGARPVLPEPGTPGE) are disordered. The span at 240-262 (TPPPGPPAPGARPVLPEPGTPGE) shows a compositional bias: pro residues.

It localises to the membrane. The polypeptide is Transmembrane protein 270 (Bos taurus (Bovine)).